A 209-amino-acid chain; its full sequence is Guanylate kinase (209 aa).

Positions 5-184 constitute a Guanylate kinase-like domain; that stretch reads GLLIVFSGPS…AAERVKRVIE (180 aa). ATP is bound at residue 12-19; the sequence is GPSGVGKG.

The protein belongs to the guanylate kinase family.

It localises to the cytoplasm. The catalysed reaction is GMP + ATP = GDP + ADP. Functionally, essential for recycling GMP and indirectly, cGMP. In Streptococcus thermophilus (strain CNRZ 1066), this protein is Guanylate kinase.